Here is a 122-residue protein sequence, read N- to C-terminus: Large ribosomal subunit protein uL14 (122 aa).

This sequence belongs to the universal ribosomal protein uL14 family. In terms of assembly, part of the 50S ribosomal subunit. Forms a cluster with proteins L3 and L19. In the 70S ribosome, L14 and L19 interact and together make contacts with the 16S rRNA in bridges B5 and B8.

Its function is as follows. Binds to 23S rRNA. Forms part of two intersubunit bridges in the 70S ribosome. The protein is Large ribosomal subunit protein uL14 of Caldicellulosiruptor bescii (strain ATCC BAA-1888 / DSM 6725 / KCTC 15123 / Z-1320) (Anaerocellum thermophilum).